A 103-amino-acid chain; its full sequence is MYAVIKTGGKQYKVAVGEKLKVEQIPADIDAEITLDQVLAVGEGESIQFGTPLVSGASVKATVVSHGRHAKVTIFKMRRRKHYQKHGGHRQNYTELRIDAINA.

Belongs to the bacterial ribosomal protein bL21 family. In terms of assembly, part of the 50S ribosomal subunit. Contacts protein L20.

In terms of biological role, this protein binds to 23S rRNA in the presence of protein L20. This is Large ribosomal subunit protein bL21 from Burkholderia mallei (strain NCTC 10247).